Consider the following 107-residue polypeptide: Replication initiation control protein YabA (107 aa).

Zn(2+)-binding residues include histidine 81, cysteine 83, cysteine 97, and cysteine 100.

This sequence belongs to the YabA family. Homotetramer. Interacts with both DnaA and DnaN, acting as a bridge between these two proteins. Requires Zn(2+) as cofactor.

It localises to the cytoplasm. It is found in the nucleoid. Its function is as follows. Involved in control of chromosome replication initiation. Inhibits the cooperative binding of DnaA to the oriC region, thus negatively regulating initiation of chromosome replication. Inhibits the ability of DnaA-ATP to form a helix on DNA; does not disassemble preformed DnaA-DNA helices. Decreases the residence time of DnaA on the chromosome at its binding sites (oriC, replication forks and promoter-binding sites). Tethers DnaA to the replication machinery via the DNA polymerase beta sliding clamp subunit (dnaN). Associates with oriC and other DnaA targets on the chromosome in a DnaA-dependent manner. This is Replication initiation control protein YabA from Streptococcus pyogenes serotype M18 (strain MGAS8232).